A 151-amino-acid polypeptide reads, in one-letter code: Small ribosomal subunit protein uS15 (151 aa).

It belongs to the universal ribosomal protein uS15 family.

In Zea mays (Maize), this protein is Small ribosomal subunit protein uS15 (RPS13).